The primary structure comprises 155 residues: S-ribosylhomocysteine lyase (155 aa).

Fe cation is bound by residues histidine 53, histidine 57, and cysteine 121.

This sequence belongs to the LuxS family. In terms of assembly, homodimer. The cofactor is Fe cation.

It catalyses the reaction S-(5-deoxy-D-ribos-5-yl)-L-homocysteine = (S)-4,5-dihydroxypentane-2,3-dione + L-homocysteine. In terms of biological role, involved in the synthesis of autoinducer 2 (AI-2) which is secreted by bacteria and is used to communicate both the cell density and the metabolic potential of the environment. The regulation of gene expression in response to changes in cell density is called quorum sensing. Catalyzes the transformation of S-ribosylhomocysteine (RHC) to homocysteine (HC) and 4,5-dihydroxy-2,3-pentadione (DPD). The polypeptide is S-ribosylhomocysteine lyase (Thermus thermophilus (strain ATCC BAA-163 / DSM 7039 / HB27)).